Consider the following 484-residue polypeptide: Probable protein disulfide-isomerase ER-60 (484 aa).

The signal sequence occupies residues 1–14 (MRWLLSCLFLVAFA). 2 Thioredoxin domains span residues 15–125 (SCSK…SRAG) and 338–467 (FEDG…REAT). Residues C46, C49, C388, and C391 each act as nucleophile in the active site. Cystine bridges form between C46/C49 and C388/C391. The Prevents secretion from ER signature appears at 481–484 (KSEL).

This sequence belongs to the protein disulfide isomerase family.

The protein localises to the endoplasmic reticulum lumen. The enzyme catalyses Catalyzes the rearrangement of -S-S- bonds in proteins.. This Schistosoma mansoni (Blood fluke) protein is Probable protein disulfide-isomerase ER-60.